The sequence spans 232 residues: 7-cyano-7-deazaguanine synthase (232 aa).

8-18 provides a ligand contact to ATP; that stretch reads FSGGQDSTTCL. Zn(2+) contacts are provided by C187, C196, C199, and C202.

The protein belongs to the QueC family. Zn(2+) is required as a cofactor.

The enzyme catalyses 7-carboxy-7-deazaguanine + NH4(+) + ATP = 7-cyano-7-deazaguanine + ADP + phosphate + H2O + H(+). It functions in the pathway purine metabolism; 7-cyano-7-deazaguanine biosynthesis. In terms of biological role, catalyzes the ATP-dependent conversion of 7-carboxy-7-deazaguanine (CDG) to 7-cyano-7-deazaguanine (preQ(0)). In Vibrio parahaemolyticus serotype O3:K6 (strain RIMD 2210633), this protein is 7-cyano-7-deazaguanine synthase.